Consider the following 442-residue polypeptide: Cyclic adenylate deaminase (442 aa).

Belongs to the metallo-dependent hydrolases superfamily. Adenosine and AMP deaminases family. The cofactor is Zn(2+).

The enzyme catalyses 3',5'-cyclic AMP + H2O + H(+) = 3',5'-cyclic IMP + NH4(+). Its function is as follows. Deaminates cAMP into cIMP, thereby repressing cAMP dependent metabolism or genes. The protein is Cyclic adenylate deaminase (add) of Leptospira interrogans serogroup Icterohaemorrhagiae serovar copenhageni (strain Fiocruz L1-130).